We begin with the raw amino-acid sequence, 170 residues long: Transcription factor E (170 aa).

One can recognise an HTH TFE/IIEalpha-type domain in the interval 1–93 (MKDAYLYVVE…AWYVDDEIIR (93 aa)).

The protein belongs to the TFE family. Monomer. Interaction with RNA polymerase subunits RpoF and RpoE is necessary for Tfe stimulatory transcription activity. Able to interact with Tbp and RNA polymerase in the absence of DNA promoter. Interacts both with the preinitiation and elongation complexes.

In terms of biological role, transcription factor that plays a role in the activation of archaeal genes transcribed by RNA polymerase. Facilitates transcription initiation by enhancing TATA-box recognition by TATA-box-binding protein (Tbp), and transcription factor B (Tfb) and RNA polymerase recruitment. Not absolutely required for transcription in vitro, but particularly important in cases where Tbp or Tfb function is not optimal. It dynamically alters the nucleic acid-binding properties of RNA polymerases by stabilizing the initiation complex and destabilizing elongation complexes. Seems to translocate with the RNA polymerase following initiation and acts by binding to the non template strand of the transcription bubble in elongation complexes. This is Transcription factor E from Pyrobaculum arsenaticum (strain DSM 13514 / JCM 11321 / PZ6).